A 392-amino-acid chain; its full sequence is Odorant receptor 9a (392 aa).

The Cytoplasmic portion of the chain corresponds to 1-41 (MSDKVKGKKQEEKDQSLRVQILVYRCMGIDLWSPTMANDRP). Residues 42–62 (WLTFVTMGPLFLFMVPMFLAA) traverse the membrane as a helical segment. Residues 63 to 74 (HEYITQVSLLSD) lie on the Extracellular side of the membrane. The chain crosses the membrane as a helical span at residues 75-95 (TLGSTFASMLTLVKFLLFCYH). Over 96–141 (RKEFVGLIYHIRAILAKEIEVWPDAREIIEVENQSDQMLSLTYTRC) the chain is Cytoplasmic. A helical transmembrane segment spans residues 142–162 (FGLAGIFAALKPFVGIILSSI). Residues 163–202 (RGDEIHLELPHNGVYPYDLQVVMFYVPTYLWNVMASYSAV) are Extracellular-facing. The chain crosses the membrane as a helical span at residues 203-223 (TMALCVDSLLFFFTYNVCAIF). Residues 224 to 268 (KIAKHRMIHLPAVGGKEELEGLVQVLLLHQKGLQIADHIADKYRP) are Cytoplasmic-facing. A helical membrane pass occupies residues 269–289 (LIFLQFFLSALQICFIGFQVA). Residues 290 to 297 (DLFPNPQS) lie on the Extracellular side of the membrane. Residues 298-318 (LYFIAFVGSLLIALFIYSKCG) traverse the membrane as a helical segment. The Cytoplasmic segment spans residues 319–362 (ENIKSASLDFGNGLYETNWTDFSPPTKRALLIAAMRAQRPCQMK). A helical membrane pass occupies residues 363–383 (GYFFEASMATFSTIVRSAVSY). Over 384 to 392 (IMMLRSFNA) the chain is Extracellular.

This sequence belongs to the insect chemoreceptor superfamily. Heteromeric odorant receptor channel (TC 1.A.69) family. Or1a subfamily. In terms of assembly, interacts with Orco. Complexes exist early in the endomembrane system in olfactory sensory neurons (OSNs), coupling these complexes to the conserved ciliary trafficking pathway. As to expression, expressed in olfactory sensory neurons in the antenna.

It is found in the cell membrane. Functionally, odorant receptor which mediates acceptance or avoidance behavior, depending on its substrates. The odorant receptor repertoire encodes a large collection of odor stimuli that vary widely in identity, intensity, and duration. May form a complex with Orco to form odorant-sensing units, providing sensitive and prolonged odorant signaling and calcium permeability. The sequence is that of Odorant receptor 9a (Or9a) from Drosophila melanogaster (Fruit fly).